The sequence spans 511 residues: 2,3-bisphosphoglycerate-independent phosphoglycerate mutase (511 aa).

2 residues coordinate Mn(2+): Asp-18 and Ser-68. The active-site Phosphoserine intermediate is Ser-68. Substrate-binding positions include His-129, 159 to 160, Arg-191, Lys-197, 261 to 264, and Lys-329; these read RD and RSDR. Mn(2+)-binding residues include Asp-396, His-400, Asp-437, His-438, and His-459. The interval 442–464 is disordered; the sequence is ERMTKQAPDGSVRPYGGHTTNPV.

This sequence belongs to the BPG-independent phosphoglycerate mutase family. As to quaternary structure, monomer. Mn(2+) is required as a cofactor.

The catalysed reaction is (2R)-2-phosphoglycerate = (2R)-3-phosphoglycerate. Its pathway is carbohydrate degradation; glycolysis; pyruvate from D-glyceraldehyde 3-phosphate: step 3/5. Catalyzes the interconversion of 2-phosphoglycerate and 3-phosphoglycerate. This chain is 2,3-bisphosphoglycerate-independent phosphoglycerate mutase, found in Streptomyces coelicolor (strain ATCC BAA-471 / A3(2) / M145).